A 182-amino-acid chain; its full sequence is Plasmolipin (182 aa).

Topologically, residues 1–35 (MAEFPSKVSTRTSSPAQGVGASVSALRPDLGFVRS) are cytoplasmic. Ser9 carries the phosphoserine modification. Positions 32–166 (FVRSALGVLA…SAFFSFQAWR (135 aa)) constitute an MARVEL domain. A helical membrane pass occupies residues 36–56 (ALGVLALLQLALGLLVWALIA). The Extracellular segment spans residues 57 to 68 (DTPYHLYPAYGW). Residues 69-89 (VMFVAVFLWLVTIVFFIIYLF) form a helical membrane-spanning segment. At 90–99 (QLHMKLYMVP) the chain is on the cytoplasmic side. The helical transmembrane segment at 100 to 120 (WPLVLLIFFVAATVLYITAFI) threads the bilayer. Residues 121-141 (ACAAAVDLTSLRGSRPYNQRS) lie on the Extracellular side of the membrane. The chain crosses the membrane as a helical span at residues 142-162 (AASFFACLVMIAYGVSAFFSF). Over 163 to 182 (QAWRGVGSNAATSQMAGGYS) the chain is Cytoplasmic.

The protein belongs to the MAL family. In terms of assembly, forms oligomers. Phosphorylated.

It is found in the membrane. The protein resides in the cell membrane. Its subcellular location is the myelin membrane. The protein localises to the apical cell membrane. In terms of biological role, main component of the myelin sheath that plays an important role in myelin membrane biogenesis and myelination. Plays an essential function in apical endocytosis. Regulates epithelial development through the regulation of apical endocytosis. Part of the intracellular machinery that mediates basolateral-to-apical transport of ICAM-1, an essential adhesion receptor in epithelial cells, from the subapical compartment in hepatic epithelial cells. This is Plasmolipin (Pllp) from Mus musculus (Mouse).